We begin with the raw amino-acid sequence, 212 residues long: V-type ATP synthase subunit E (212 aa).

It belongs to the V-ATPase E subunit family.

Functionally, produces ATP from ADP in the presence of a proton gradient across the membrane. This is V-type ATP synthase subunit E from Nitrosococcus oceani (strain ATCC 19707 / BCRC 17464 / JCM 30415 / NCIMB 11848 / C-107).